The sequence spans 341 residues: tRNA N6-adenosine threonylcarbamoyltransferase (341 aa).

Positions 111 and 115 each coordinate Fe cation. Residues 134–138, D167, G180, and N272 contribute to the substrate site; that span reads LVSGG. A Fe cation-binding site is contributed by D300.

It belongs to the KAE1 / TsaD family. It depends on Fe(2+) as a cofactor.

The protein resides in the cytoplasm. It catalyses the reaction L-threonylcarbamoyladenylate + adenosine(37) in tRNA = N(6)-L-threonylcarbamoyladenosine(37) in tRNA + AMP + H(+). Required for the formation of a threonylcarbamoyl group on adenosine at position 37 (t(6)A37) in tRNAs that read codons beginning with adenine. Is involved in the transfer of the threonylcarbamoyl moiety of threonylcarbamoyl-AMP (TC-AMP) to the N6 group of A37, together with TsaE and TsaB. TsaD likely plays a direct catalytic role in this reaction. The sequence is that of tRNA N6-adenosine threonylcarbamoyltransferase from Edwardsiella ictaluri (strain 93-146).